The following is a 521-amino-acid chain: DEAD-box ATP-dependent RNA helicase 1 (521 aa).

The interval 1-20 (MVVAMATKEEEGGPSSRVPH) is disordered. Positions 36–65 (CPVAHLPRLDPRLVKPLQRMGIESFFPVQV) match the Q motif motif. One can recognise a Helicase ATP-binding domain in the interval 72–302 (IGPGAFERDI…QLELQHPLLL (231 aa)). Position 85–92 (85–92 (SPTGSGKT)) interacts with ATP. The DEAD box motif lies at 213 to 216 (DETD). The Helicase C-terminal domain occupies 330 to 480 (SLIVLLQELR…SLPEESVETL (151 aa)). Basic and acidic residues predominate over residues 495–507 (LESEATKKSKSGD). The disordered stretch occupies residues 495–521 (LESEATKKSKSGDKAPNASKRKRTINT).

It belongs to the DEAD box helicase family. DDX51/DBP6 subfamily.

It carries out the reaction ATP + H2O = ADP + phosphate + H(+). The chain is DEAD-box ATP-dependent RNA helicase 1 from Oryza sativa subsp. japonica (Rice).